Here is a 626-residue protein sequence, read N- to C-terminus: E3 ubiquitin-protein ligase HRD1 (626 aa).

A signal peptide spans 1–15 (MQLLLSSVCMALTSA). Topologically, residues 16-38 (VIGFAYYQKQQFYPAVVYITKSN) are lumenal. The chain crosses the membrane as a helical span at residues 39-59 (ASMGVIYIQFFVIVFMFGKLL). Topologically, residues 60–96 (SKIFLGTLRAAEFEHLLERFWYALTETCLAFTVFRDD) are cytoplasmic. A helical transmembrane segment spans residues 97 to 117 (FNPRFVALFTVLLFLKSFHWL). Residues 118 to 128 (AEERVDFMERS) lie on the Lumenal side of the membrane. The helical transmembrane segment at 129 to 149 (PVLGWLFHIRVGSLLTVLGIL) threads the bilayer. Topologically, residues 150–167 (DYVLLIHAYNSTLVRGPT) are cytoplasmic. A helical membrane pass occupies residues 168–188 (VQLVFGFEYAILLTVIASTAI). Residues 189–222 (KYVLHAAEMRTDTPWENKAVFLLYTELVIGLIKV) lie on the Lumenal side of the membrane. Residues 223–243 (VLYILFVVIMAKIYALPMFVF) form a helical membrane-spanning segment. An interaction with p53/TP53 region spans residues 234-268 (KIYALPMFVFRPMFFTIRNFRKALNDVIMSRRAIR). Residues 244–626 (RPMFFTIRNF…AATNERTTAE (383 aa)) lie on the Cytoplasmic side of the membrane. The RING-type; atypical zinc-finger motif lies at 289–328 (CIICREDMVNHSKKLPCGHIFHTTCLRSWFQRQQTCPTCR). A disordered region spans residues 569–600 (DADEDDIPSTATEAVSIPNSDADFEENSSELG). The segment covering 577–587 (STATEAVSIPN) has biased composition (polar residues).

Belongs to the HRD1 family. Homodimer. Interacts with p53. May interact with Septin2.

It is found in the endoplasmic reticulum membrane. It carries out the reaction S-ubiquitinyl-[E2 ubiquitin-conjugating enzyme]-L-cysteine + [acceptor protein]-L-lysine = [E2 ubiquitin-conjugating enzyme]-L-cysteine + N(6)-ubiquitinyl-[acceptor protein]-L-lysine.. The protein operates within protein modification; protein ubiquitination. Acts as an E3 ubiquitin-protein ligase which accepts ubiquitin specifically from endoplasmic reticulum-associated UBC7 E2 ligase and transfers it to substrates, promoting their degradation. Component of the endoplasmic reticulum quality control (ERQC) system also called ER-associated degradation (ERAD) involved in ubiquitin-dependent degradation of misfolded endoplasmic reticulum proteins. Also promotes the degradation of normal but naturally short-lived proteins. Protects cells from ER stress-induced apoptosis. Sequesters p53 in the cytoplasm and promotes its degradation, thereby negatively regulating its biological function in transcription, cell cycle regulation and apoptosis. This is E3 ubiquitin-protein ligase HRD1 (sip3) from Drosophila melanogaster (Fruit fly).